Consider the following 104-residue polypeptide: Membrane magnesium transporter (104 aa).

Residues 1 to 2 lie on the Cytoplasmic side of the membrane; the sequence is MN. A helical membrane pass occupies residues 3–23; that stretch reads LGFLVGVFGVLILSHAAYSTI. Residues 24–40 lie on the Lumenal side of the membrane; the sequence is QYRGLLKIMEEEFSRPP. A helical membrane pass occupies residues 41–61; that stretch reads INVILELIIGLALCMWAALTF. Residues 62-104 lie on the Cytoplasmic side of the membrane; the sequence is PGKFLSIHPDSDENRAVFLPDNSDFMIFNHRGRLFPPQIDMKF.

The protein belongs to the membrane magnesium transporter (TC 1.A.67) family. In terms of assembly, component of the ER membrane protein complex (EMC).

Its subcellular location is the endoplasmic reticulum membrane. It localises to the golgi apparatus membrane. The protein resides in the early endosome membrane. Functionally, mediates Mg(2+) transport. This chain is Membrane magnesium transporter, found in Arabidopsis thaliana (Mouse-ear cress).